A 396-amino-acid chain; its full sequence is Putative isochorismate synthase (396 aa).

The protein belongs to the isochorismate synthase family.

The catalysed reaction is chorismate = isochorismate. It participates in siderophore biosynthesis; amonabactin biosynthesis. Involved in the synthesis of amonabactin, a phenolate siderophore containing 2,3-dihydroxybenzoic acid (2,3-DHB). This Aeromonas hydrophila protein is Putative isochorismate synthase (amoA).